Consider the following 231-residue polypeptide: F-box protein SKIP8 (231 aa).

The disordered stretch occupies residues 1-24 (MPSTPLANGGTPPMGGGERTTVTT). The F-box domain maps to 34–80 (VSMMEQLVPEITTHALSYLDYPSLCRLSMTNSLMRKAANDDNAWKAL).

In terms of assembly, part of a SCF (ASK-cullin-F-box) protein ligase complex. Interacts with SKP1A/ASK1.

Its pathway is protein modification; protein ubiquitination. Component of SCF(ASK-cullin-F-box) E3 ubiquitin ligase complexes, which may mediate the ubiquitination and subsequent proteasomal degradation of target proteins. The sequence is that of F-box protein SKIP8 (SKIP8) from Arabidopsis thaliana (Mouse-ear cress).